Here is a 150-residue protein sequence, read N- to C-terminus: MTKAFDSALRLLTRREYSAMELCDKLKQKGFSTNDVQNALYECQRLGYQSDVRFVENYIRVRIHQGYGPLKIRQELKNKGIDPDLIQSVLHQEKDNWVNYALRAWEKKFKRQDDFSYSEIQKQQRFLLYRGFDRDVISKVFKEVKSSYLI.

This sequence belongs to the RecX family.

Its subcellular location is the cytoplasm. Functionally, modulates RecA activity. This Legionella pneumophila (strain Corby) protein is Regulatory protein RecX.